A 201-amino-acid polypeptide reads, in one-letter code: Imidazole glycerol phosphate synthase subunit HisH (201 aa).

The Glutamine amidotransferase type-1 domain occupies 1-201 (MIIVIDYDAG…ILKKFVDLCD (201 aa)). Cys79 functions as the Nucleophile in the catalytic mechanism. Catalysis depends on residues His181 and Glu183.

Heterodimer of HisH and HisF.

Its subcellular location is the cytoplasm. It carries out the reaction 5-[(5-phospho-1-deoxy-D-ribulos-1-ylimino)methylamino]-1-(5-phospho-beta-D-ribosyl)imidazole-4-carboxamide + L-glutamine = D-erythro-1-(imidazol-4-yl)glycerol 3-phosphate + 5-amino-1-(5-phospho-beta-D-ribosyl)imidazole-4-carboxamide + L-glutamate + H(+). The enzyme catalyses L-glutamine + H2O = L-glutamate + NH4(+). It functions in the pathway amino-acid biosynthesis; L-histidine biosynthesis; L-histidine from 5-phospho-alpha-D-ribose 1-diphosphate: step 5/9. IGPS catalyzes the conversion of PRFAR and glutamine to IGP, AICAR and glutamate. The HisH subunit catalyzes the hydrolysis of glutamine to glutamate and ammonia as part of the synthesis of IGP and AICAR. The resulting ammonia molecule is channeled to the active site of HisF. The sequence is that of Imidazole glycerol phosphate synthase subunit HisH from Streptococcus mutans serotype c (strain ATCC 700610 / UA159).